The following is a 273-amino-acid chain: NADPH-dependent 7-cyano-7-deazaguanine reductase (273 aa).

Ile-80–Ser-82 is a binding site for substrate. NADPH is bound at residue Ser-82–Lys-83. The Thioimide intermediate role is filled by Cys-180. Residue Asp-187 is the Proton donor of the active site. Position 219-220 (His-219–Glu-220) interacts with substrate. Arg-248–Gly-249 provides a ligand contact to NADPH.

It belongs to the GTP cyclohydrolase I family. QueF type 2 subfamily. Homodimer.

Its subcellular location is the cytoplasm. It catalyses the reaction 7-aminomethyl-7-carbaguanine + 2 NADP(+) = 7-cyano-7-deazaguanine + 2 NADPH + 3 H(+). It functions in the pathway tRNA modification; tRNA-queuosine biosynthesis. Catalyzes the NADPH-dependent reduction of 7-cyano-7-deazaguanine (preQ0) to 7-aminomethyl-7-deazaguanine (preQ1). The chain is NADPH-dependent 7-cyano-7-deazaguanine reductase from Bordetella avium (strain 197N).